The primary structure comprises 265 residues: MNCYPAGHLLGKGHVQLNESGENAELISQEQIGDDLNGWHRDAFEDIASRLTDPGFPCVFSRNAFRKKLVKFVFVEGSGKEDIRHLGAGLKDYVELSRDWDGALDTAYPLVVVFSADAVTADSVEQYHAFGWWVLQELHAIDPTPWPEGVDKGPQSEAWSMCFHGMPLFINMSSPAHQVRRSRNLGRHFALVINPRERFDVFAGDTPSGRKVRSNIRGRIARYDGTPHAQQLGSYGTGALEWMQYGLVEENRERADVCPFTFRGA.

This sequence belongs to the DcsA family. Heme serves as cofactor.

Involved in the biosynthesis of the antibiotic D-cycloserine (DCS), a cyclic structural analog of D-alanine, used as an antitubercular agent. Could catalyze the production of N(omega)-hydroxy-L-arginine (NHA) from L-arginine. This Streptomyces lavendulae protein is Putative N(omega)-hydroxy-L-arginine synthase DcsA.